The primary structure comprises 156 residues: Cyclic pyranopterin monophosphate synthase (156 aa).

Substrate-binding positions include 73–75 and 110–111; these read LCH and ME. Residue D125 is part of the active site.

The protein belongs to the MoaC family. As to quaternary structure, homohexamer; trimer of dimers.

The catalysed reaction is (8S)-3',8-cyclo-7,8-dihydroguanosine 5'-triphosphate = cyclic pyranopterin phosphate + diphosphate. Its pathway is cofactor biosynthesis; molybdopterin biosynthesis. Its function is as follows. Catalyzes the conversion of (8S)-3',8-cyclo-7,8-dihydroguanosine 5'-triphosphate to cyclic pyranopterin monophosphate (cPMP). This Stutzerimonas stutzeri (strain A1501) (Pseudomonas stutzeri) protein is Cyclic pyranopterin monophosphate synthase.